A 505-amino-acid polypeptide reads, in one-letter code: Putative thymidine phosphorylase (505 aa).

This sequence belongs to the thymidine/pyrimidine-nucleoside phosphorylase family. Type 2 subfamily.

It catalyses the reaction thymidine + phosphate = 2-deoxy-alpha-D-ribose 1-phosphate + thymine. This chain is Putative thymidine phosphorylase, found in Parvibaculum lavamentivorans (strain DS-1 / DSM 13023 / NCIMB 13966).